Here is a 459-residue protein sequence, read N- to C-terminus: Peptidyl-prolyl cis-trans isomerase FKBP4 (459 aa).

N-acetylmethionine; in peptidyl-prolyl cis-trans isomerase FKBP4; alternate is present on M1. A disordered region spans residues M1 to D24. T2 bears the N-acetylthreonine; in peptidyl-prolyl cis-trans isomerase FKBP4, N-terminally processed; partial mark. One can recognise a PPIase FKBP-type 1 domain in the interval G50–K138. At T143 the chain carries Phosphothreonine; by CK2. A PPIase FKBP-type 2 domain is found at G167–E253. Phosphotyrosine is present on Y220. The tract at residues L267–I400 is interaction with tubulin. TPR repeat units lie at residues S270–E303, L319–N352, and E353–N386. Position 282 is an N6-acetyllysine (K282). Position 373 is an omega-N-methylarginine (R373). The segment at E421–A459 is disordered. A compositionally biased stretch (basic and acidic residues) spans H434–K445. At T436 the chain carries Phosphothreonine. Residue K441 forms a Glycyl lysine isopeptide (Lys-Gly) (interchain with G-Cter in SUMO1) linkage. Residues S446–A459 show a composition bias toward polar residues. Phosphoserine is present on residues S451 and S453.

Homodimer. Interacts with GLMN. Associates with HSP90AA1 and HSP70 in steroid hormone receptor complexes. Also interacts with peroxisomal phytanoyl-CoA alpha-hydroxylase (PHYH). Interacts with NR3C1 and dynein. Interacts with HSF1 in the HSP90 complex. Associates with tubulin. Interacts with MAPT/TAU. Interacts (via TPR domain) with S100A1, S100A2 and S100A6; the interaction is Ca(2+) dependent. Interaction with S100A1 and S100A2 (but not with S100A6) leads to inhibition of FKBP4-HSP90 interaction. Interacts with dynein; causes partially NR3C1 transport to the nucleus. Post-translationally, phosphorylation by CK2 results in loss of HSP90 binding activity. In terms of tissue distribution, widely expressed.

Its subcellular location is the cytoplasm. It localises to the cytosol. The protein resides in the mitochondrion. The protein localises to the nucleus. It is found in the cytoskeleton. Its subcellular location is the cell projection. It localises to the axon. The catalysed reaction is [protein]-peptidylproline (omega=180) = [protein]-peptidylproline (omega=0). Inhibited by FK506. Its function is as follows. Immunophilin protein with PPIase and co-chaperone activities. Component of steroid receptors heterocomplexes through interaction with heat-shock protein 90 (HSP90). May play a role in the intracellular trafficking of heterooligomeric forms of steroid hormone receptors between cytoplasm and nuclear compartments. The isomerase activity controls neuronal growth cones via regulation of TRPC1 channel opening. Also acts as a regulator of microtubule dynamics by inhibiting MAPT/TAU ability to promote microtubule assembly. May have a protective role against oxidative stress in mitochondria. This is Peptidyl-prolyl cis-trans isomerase FKBP4 (FKBP4) from Homo sapiens (Human).